Here is a 563-residue protein sequence, read N- to C-terminus: Tripeptidyl-peptidase 1 (563 aa).

A signal peptide spans 1-19 (MGLQACLLGLFALILSGKC). Positions 20–195 (SYSPEPDQRR…PEPQVTGTVG (176 aa)) are cleaved as a propeptide — removed in mature form. An intrachain disulfide couples Cys111 to Cys122. Residues 199–563 (GVTPSVIRKR…PALLKTLLNP (365 aa)) enclose the Peptidase S53 domain. 2 N-linked (GlcNAc...) asparagine glycosylation sites follow: Asn210 and Asn222. Residues Glu272 and Asp276 each act as charge relay system in the active site. Asn286, Asn313, and Asn443 each carry an N-linked (GlcNAc...) asparagine glycan. 2 cysteine pairs are disulfide-bonded: Cys365–Cys526 and Cys522–Cys537. Catalysis depends on Ser475, which acts as the Charge relay system. Ca(2+)-binding residues include Asp517 and Val518. Ca(2+)-binding residues include Gly539, Gly541, and Asp543.

As to quaternary structure, monomer. Interacts with CLN5. Interacts with CLN3. The cofactor is Ca(2+). Activated by autocatalytic proteolytical processing upon acidification. N-glycosylation is required for processing and activity.

The protein localises to the lysosome. The protein resides in the melanosome. The enzyme catalyses Release of an N-terminal tripeptide from a polypeptide, but also has endopeptidase activity.. In terms of biological role, lysosomal serine protease with tripeptidyl-peptidase I activity. May act as a non-specific lysosomal peptidase which generates tripeptides from the breakdown products produced by lysosomal proteinases. Requires substrates with an unsubstituted N-terminus. This chain is Tripeptidyl-peptidase 1 (TPP1), found in Pan troglodytes (Chimpanzee).